A 655-amino-acid chain; its full sequence is NACHT, LRR and PYD domains-containing protein 10 (655 aa).

A Pyrin domain is found at 1–96 (MAMAKARKPR…VDQLSHICLH (96 aa)). The region spanning 167-484 (SLVVLQGSAG…AMSYLVKEDQ (318 aa)) is the NACHT domain. 173–180 (GSAGTGKT) is a binding site for ATP. Residues 597–609 (QSQNLFSVKSSLS) are compositionally biased toward polar residues. The tract at residues 597 to 655 (QSQNLFSVKSSLSHGPKEEQKCPSVHGQKEGKDNIAGTQKEASTGKGRGTEETPKNTYI) is disordered. 2 stretches are compositionally biased toward basic and acidic residues: residues 611–629 (GPKEEQKCPSVHGQKEGKD) and 644–655 (RGTEETPKNTYI).

This sequence belongs to the NLRP family. Oligomerizes. Interacts with PYCARD. Also interacts with CASP1 and IL1B. Interacts with NOD1 and components of the NOD1 signaling pathway including RIPK2, NR2C2/TAK1 and IKBKG/NEMO. Highly expressed in basal and suprabasal epidermal cell layers with lower levels in dermal fibroblast cells (at protein level). Widely expressed with highest levels in heart, brain and skeletal muscle. Also expressed in liver, colon, dermis and epidermis. Little expression detected in myeloid cells or peripheral blood mononuclear cells.

It localises to the cytoplasm. Its subcellular location is the cell membrane. Functionally, inhibits autoprocessing of CASP1, CASP1-dependent IL1B secretion, PYCARD aggregation and PYCARD-mediated apoptosis but not apoptosis induced by FAS or BID. Displays anti-inflammatory activity. Required for immunity against C.albicans infection. Involved in the innate immune response by contributing to pro-inflammatory cytokine release in response to invasive bacterial infection. Contributes to T-cell-mediated inflammatory responses in the skin. Plays a role in protection against periodontitis through its involvement in induction of IL1A via ERK activation in oral epithelial cells infected with periodontal pathogens. Exhibits both ATPase and GTPase activities. The polypeptide is NACHT, LRR and PYD domains-containing protein 10 (NLRP10) (Homo sapiens (Human)).